The sequence spans 564 residues: Probable diguanylate cyclase DgcQ (564 aa).

The next 2 membrane-spanning stretches (helical) occupy residues 20-40 (LGPGHVVNLCFIVVLLFSTLL) and 360-380 (IALTLLWALFTTMLLISWYVI). In terms of domain architecture, GGDEF spans 428 to 563 (HPFSVIQVDL…GRNRVFASDN (136 aa)). D436 contacts Mg(2+). Residues N444, H449, and D453 each coordinate substrate. Residue E479 participates in Mg(2+) binding. The Proton acceptor role is filled by E479.

In terms of assembly, homodimer. The cofactor is Mg(2+).

The protein resides in the cell inner membrane. It catalyses the reaction 2 GTP = 3',3'-c-di-GMP + 2 diphosphate. It participates in glycan metabolism; bacterial cellulose biosynthesis. The protein operates within purine metabolism; 3',5'-cyclic di-GMP biosynthesis. Its function is as follows. Catalyzes the synthesis of cyclic-di-GMP (c-di-GMP) via the condensation of 2 GTP molecules. Cyclic-di-GMP is a second messenger which controls cell surface-associated traits in bacteria. Involved in the regulation of cellulose production. This chain is Probable diguanylate cyclase DgcQ, found in Escherichia coli (strain K12).